The sequence spans 185 residues: Elongation factor P (185 aa).

The protein belongs to the elongation factor P family.

It localises to the cytoplasm. It functions in the pathway protein biosynthesis; polypeptide chain elongation. Functionally, involved in peptide bond synthesis. Stimulates efficient translation and peptide-bond synthesis on native or reconstituted 70S ribosomes in vitro. Probably functions indirectly by altering the affinity of the ribosome for aminoacyl-tRNA, thus increasing their reactivity as acceptors for peptidyl transferase. The chain is Elongation factor P from Streptococcus uberis (strain ATCC BAA-854 / 0140J).